Reading from the N-terminus, the 171-residue chain is Ribosome maturation factor RimP (171 aa).

The protein belongs to the RimP family.

Its subcellular location is the cytoplasm. Functionally, required for maturation of 30S ribosomal subunits. The sequence is that of Ribosome maturation factor RimP from Anaeromyxobacter dehalogenans (strain 2CP-C).